A 356-amino-acid polypeptide reads, in one-letter code: Butyrate kinase 2 (356 aa).

It belongs to the acetokinase family. As to quaternary structure, homodimer.

The protein resides in the cytoplasm. It carries out the reaction butanoate + ATP = butanoyl phosphate + ADP. It functions in the pathway lipid metabolism; butanoate metabolism. Its function is as follows. Catalyzes the conversion of butyryl-CoA through butyryl phosphate to butyrate. The polypeptide is Butyrate kinase 2 (buk2) (Clostridium acetobutylicum (strain ATCC 824 / DSM 792 / JCM 1419 / IAM 19013 / LMG 5710 / NBRC 13948 / NRRL B-527 / VKM B-1787 / 2291 / W)).